The primary structure comprises 448 residues: tRNA(Ile)-lysidine synthase (448 aa).

An ATP-binding site is contributed by 25–30 (SGGSDS).

Belongs to the tRNA(Ile)-lysidine synthase family.

The protein localises to the cytoplasm. It catalyses the reaction cytidine(34) in tRNA(Ile2) + L-lysine + ATP = lysidine(34) in tRNA(Ile2) + AMP + diphosphate + H(+). Functionally, ligates lysine onto the cytidine present at position 34 of the AUA codon-specific tRNA(Ile) that contains the anticodon CAU, in an ATP-dependent manner. Cytidine is converted to lysidine, thus changing the amino acid specificity of the tRNA from methionine to isoleucine. The chain is tRNA(Ile)-lysidine synthase from Brucella abortus (strain S19).